Consider the following 353-residue polypeptide: Photosystem II D2 protein (353 aa).

Threonine 2 is subject to N-acetylthreonine. Threonine 2 bears the Phosphothreonine mark. The helical transmembrane segment at 41 to 61 threads the bilayer; the sequence is CAYFALGGWFTGTTFVTSWYT. A chlorophyll a-binding site is contributed by histidine 118. A helical transmembrane segment spans residues 125 to 141; the sequence is GFMLRQFELARSVQLRP. Pheophytin a is bound by residues glutamine 130 and asparagine 143. A helical transmembrane segment spans residues 153-166; that stretch reads VFVSVFLIYPLGQS. Histidine 198 provides a ligand contact to chlorophyll a. Residues 208–228 form a helical membrane-spanning segment; it reads AALLCAIHGATVENTLFEDGD. 2 residues coordinate a plastoquinone: histidine 215 and phenylalanine 262. Histidine 215 provides a ligand contact to Fe cation. Histidine 269 contacts Fe cation. The helical transmembrane segment at 279–295 threads the bilayer; it reads GLWMSALGVVGLALNLR.

This sequence belongs to the reaction center PufL/M/PsbA/D family. In terms of assembly, PSII is composed of 1 copy each of membrane proteins PsbA, PsbB, PsbC, PsbD, PsbE, PsbF, PsbH, PsbI, PsbJ, PsbK, PsbL, PsbM, PsbT, PsbX, PsbY, PsbZ, Psb30/Ycf12, at least 3 peripheral proteins of the oxygen-evolving complex and a large number of cofactors. It forms dimeric complexes. The cofactor is The D1/D2 heterodimer binds P680, chlorophylls that are the primary electron donor of PSII, and subsequent electron acceptors. It shares a non-heme iron and each subunit binds pheophytin, quinone, additional chlorophylls, carotenoids and lipids. There is also a Cl(-1) ion associated with D1 and D2, which is required for oxygen evolution. The PSII complex binds additional chlorophylls, carotenoids and specific lipids..

The protein localises to the plastid. It localises to the chloroplast thylakoid membrane. It carries out the reaction 2 a plastoquinone + 4 hnu + 2 H2O = 2 a plastoquinol + O2. Its function is as follows. Photosystem II (PSII) is a light-driven water:plastoquinone oxidoreductase that uses light energy to abstract electrons from H(2)O, generating O(2) and a proton gradient subsequently used for ATP formation. It consists of a core antenna complex that captures photons, and an electron transfer chain that converts photonic excitation into a charge separation. The D1/D2 (PsbA/PsbD) reaction center heterodimer binds P680, the primary electron donor of PSII as well as several subsequent electron acceptors. D2 is needed for assembly of a stable PSII complex. In Spinacia oleracea (Spinach), this protein is Photosystem II D2 protein.